The primary structure comprises 230 residues: Orotidine 5'-phosphate decarboxylase (230 aa).

Residues D10, K32, 59–68 (DLKLHDIPNT), T118, R179, Q188, G208, and R209 each bind substrate. Residue K61 is the Proton donor of the active site.

The protein belongs to the OMP decarboxylase family. Type 1 subfamily. Homodimer.

It catalyses the reaction orotidine 5'-phosphate + H(+) = UMP + CO2. It functions in the pathway pyrimidine metabolism; UMP biosynthesis via de novo pathway; UMP from orotate: step 2/2. Functionally, catalyzes the decarboxylation of orotidine 5'-monophosphate (OMP) to uridine 5'-monophosphate (UMP). The chain is Orotidine 5'-phosphate decarboxylase from Opitutus terrae (strain DSM 11246 / JCM 15787 / PB90-1).